The primary structure comprises 255 residues: Indole-3-glycerol phosphate synthase (255 aa).

The protein belongs to the TrpC family.

The catalysed reaction is 1-(2-carboxyphenylamino)-1-deoxy-D-ribulose 5-phosphate + H(+) = (1S,2R)-1-C-(indol-3-yl)glycerol 3-phosphate + CO2 + H2O. Its pathway is amino-acid biosynthesis; L-tryptophan biosynthesis; L-tryptophan from chorismate: step 4/5. The sequence is that of Indole-3-glycerol phosphate synthase from Streptococcus mutans serotype c (strain ATCC 700610 / UA159).